The sequence spans 38 residues: Large ribosomal subunit protein bL36 (38 aa).

It belongs to the bacterial ribosomal protein bL36 family.

The polypeptide is Large ribosomal subunit protein bL36 (Pseudomonas entomophila (strain L48)).